The primary structure comprises 428 residues: UPF0229 protein YeaH (428 aa).

A compositionally biased stretch (basic and acidic residues) spans 78-90 (GNDHFIQNDRIER). Residues 78–111 (GNDHFIQNDRIERPQGGGGGGSGSGQGQASQDGE) are disordered. Positions 92-103 (QGGGGGGSGSGQ) are enriched in gly residues.

This sequence belongs to the UPF0229 family.

In Salmonella enteritidis PT4 (strain P125109), this protein is UPF0229 protein YeaH.